The primary structure comprises 128 residues: MRYAIMVTGPAYGTQQASSALQFAHALLNEGHELASVFFYREGVYNANLLTSPASDEYDLVRAWQKLNTQHGVALNICVAAALRRGIIDETEAGRLELPSANLQPGFTLSGLGALAEASLTCDRVVQF.

Cys78 acts as the Cysteine persulfide intermediate in catalysis.

It belongs to the DsrE/TusD family. As to quaternary structure, heterohexamer, formed by a dimer of trimers. The hexameric TusBCD complex contains 2 copies each of TusB, TusC and TusD. The TusBCD complex interacts with TusE.

It localises to the cytoplasm. Its function is as follows. Part of a sulfur-relay system required for 2-thiolation of 5-methylaminomethyl-2-thiouridine (mnm(5)s(2)U) at tRNA wobble positions. Accepts sulfur from TusA and transfers it in turn to TusE. This is Sulfurtransferase TusD from Salmonella dublin (strain CT_02021853).